The primary structure comprises 279 residues: Large ribosomal subunit protein uL2 (279 aa).

2 disordered regions span residues 33 to 58 and 223 to 279; these read LLAP…GGGH and GVAM…RKRG. Composition is skewed to basic residues over residues 40–58 and 269–279; these read KGGR…GGGH and VRRRYATRKRG.

The protein belongs to the universal ribosomal protein uL2 family. Part of the 50S ribosomal subunit. Forms a bridge to the 30S subunit in the 70S ribosome.

Functionally, one of the primary rRNA binding proteins. Required for association of the 30S and 50S subunits to form the 70S ribosome, for tRNA binding and peptide bond formation. It has been suggested to have peptidyltransferase activity; this is somewhat controversial. Makes several contacts with the 16S rRNA in the 70S ribosome. This is Large ribosomal subunit protein uL2 from Salinispora arenicola (strain CNS-205).